Here is a 99-residue protein sequence, read N- to C-terminus: Putative endopeptidase RzpR (99 aa).

The chain is Putative endopeptidase RzpR (rzpR) from Escherichia coli (strain K12).